Consider the following 65-residue polypeptide: Large ribosomal subunit protein bL35 (65 aa).

This sequence belongs to the bacterial ribosomal protein bL35 family.

This chain is Large ribosomal subunit protein bL35, found in Thermotoga petrophila (strain ATCC BAA-488 / DSM 13995 / JCM 10881 / RKU-1).